A 218-amino-acid chain; its full sequence is Probable transaldolase (218 aa).

Lys87 acts as the Schiff-base intermediate with substrate in catalysis.

It belongs to the transaldolase family. Type 3B subfamily.

It is found in the cytoplasm. The catalysed reaction is D-sedoheptulose 7-phosphate + D-glyceraldehyde 3-phosphate = D-erythrose 4-phosphate + beta-D-fructose 6-phosphate. Its pathway is carbohydrate degradation; pentose phosphate pathway; D-glyceraldehyde 3-phosphate and beta-D-fructose 6-phosphate from D-ribose 5-phosphate and D-xylulose 5-phosphate (non-oxidative stage): step 2/3. Functionally, transaldolase is important for the balance of metabolites in the pentose-phosphate pathway. The chain is Probable transaldolase from Flavobacterium psychrophilum (strain ATCC 49511 / DSM 21280 / CIP 103535 / JIP02/86).